The following is a 460-amino-acid chain: Ribosomal protein uS12 methylthiotransferase RimO (460 aa).

Positions Asn-16 to Ser-130 constitute an MTTase N-terminal domain. Positions 25, 61, 93, 164, 168, and 171 each coordinate [4Fe-4S] cluster. The Radical SAM core domain occupies Ser-150–Lys-382. Residues Lys-385–Asn-455 enclose the TRAM domain.

It belongs to the methylthiotransferase family. RimO subfamily. The cofactor is [4Fe-4S] cluster.

It localises to the cytoplasm. It carries out the reaction L-aspartate(89)-[ribosomal protein uS12]-hydrogen + (sulfur carrier)-SH + AH2 + 2 S-adenosyl-L-methionine = 3-methylsulfanyl-L-aspartate(89)-[ribosomal protein uS12]-hydrogen + (sulfur carrier)-H + 5'-deoxyadenosine + L-methionine + A + S-adenosyl-L-homocysteine + 2 H(+). Its function is as follows. Catalyzes the methylthiolation of an aspartic acid residue of ribosomal protein uS12. The protein is Ribosomal protein uS12 methylthiotransferase RimO of Chlamydia abortus (strain DSM 27085 / S26/3) (Chlamydophila abortus).